Here is a 94-residue protein sequence, read N- to C-terminus: Large ribosomal subunit protein uL23 (94 aa).

It belongs to the universal ribosomal protein uL23 family. Part of the 50S ribosomal subunit. Contacts protein L29, and trigger factor when it is bound to the ribosome.

In terms of biological role, one of the early assembly proteins it binds 23S rRNA. One of the proteins that surrounds the polypeptide exit tunnel on the outside of the ribosome. Forms the main docking site for trigger factor binding to the ribosome. The sequence is that of Large ribosomal subunit protein uL23 from Akkermansia muciniphila (strain ATCC BAA-835 / DSM 22959 / JCM 33894 / BCRC 81048 / CCUG 64013 / CIP 107961 / Muc).